The following is a 358-amino-acid chain: MPRIENEPKLDFKDVLLRPKRSTLKSRADVELDREYVFRNSKATYTGVPVVASNMDTVGTFEMAAALNNHKIFTTIHKHYSVDEWKAFAASASPDTFNNLAISSGISDNDWTKLNTVITELPQLKYICLDVANGYSESFVEFIRRVREAYPKHTIMAGNVVTGEMVEELILSGADIVKVGIGPGSVCTTRKKAGVGYPQLSAVLECADAAHGLNGHVMSDGGCSNPGDVAKAFGAGADFVMIGGLFAGHDQSGGDLIEHNGKKFKLFYGMSSDTAMKKHHGSVAEYRASEGKTVTIPYRGDVNGTVQDILGGIRSACTYTGAKHLKELAKRATFIRVTQQTNDMYVPFEVPTVPAPSK.

Residues 26–27, lysine 78, 130–132, and 181–182 contribute to the NADP(+) site; these read SR, DVA, and IG. Residues glycine 182, glycine 184, and cysteine 187 each coordinate K(+). Catalysis depends on cysteine 187, which acts as the Thioimidate intermediate. The active-site Proton donor/acceptor is threonine 189. Arginine 190 lines the K(+) pocket. Residues 220-222, 243-244, 269-271, and 287-291 contribute to the GMP site; these read DGG, GG, GMS, and RASEG. Residues methionine 270, 286-287, and 315-318 contribute to the NADP(+) site; these read YR and SACT.

The protein belongs to the IMPDH/GMPR family. GuaC type 1 subfamily. In terms of assembly, homotetramer.

The catalysed reaction is IMP + NH4(+) + NADP(+) = GMP + NADPH + 2 H(+). Catalyzes the irreversible NADPH-dependent deamination of GMP to IMP. It functions in the conversion of nucleobase, nucleoside and nucleotide derivatives of G to A nucleotides, and in maintaining the intracellular balance of A and G nucleotides. This chain is GMP reductase, found in Caenorhabditis elegans.